The following is a 193-amino-acid chain: dCTP deaminase (193 aa).

DCTP is bound by residues 110-115, D128, 136-138, Y171, K178, and Q182; these read RSSLAR and VLE. Catalysis depends on E138, which acts as the Proton donor/acceptor. The disordered stretch occupies residues 169–193; the sequence is RPYNRRQDAKYRDQQGAVASRIDKD.

This sequence belongs to the dCTP deaminase family. As to quaternary structure, homotrimer.

It carries out the reaction dCTP + H2O + H(+) = dUTP + NH4(+). The protein operates within pyrimidine metabolism; dUMP biosynthesis; dUMP from dCTP (dUTP route): step 1/2. Catalyzes the deamination of dCTP to dUTP. This Cronobacter sakazakii (strain ATCC BAA-894) (Enterobacter sakazakii) protein is dCTP deaminase.